The primary structure comprises 322 residues: Myeloid-associated differentiation marker (322 aa).

The span at 1–18 (MPVTVTRTTITTTTTSSS) shows a compositional bias: low complexity. A disordered region spans residues 1-21 (MPVTVTRTTITTTTTSSSGLG). Serine 22 is modified (phosphoserine). 2 consecutive MARVEL domains span residues 31 to 163 (ALTQ…ARPG) and 168 to 319 (YMAT…HLVF). The next 8 membrane-spanning stretches (helical) occupy residues 41-61 (LLQLVSTCVAFSLVASVGAWT), 70-90 (FTWCFCFSVTLIILIVELCGL), 101-121 (FPITFACYAALFCLSASIIYP), 137-157 (AIAATFFSCIACVAYATEVAW), 171-191 (TVPGLLKVLETFVACIIFAFI), 203-223 (LEWCVAVYAICFILAAIAILL), 239-259 (FLSGLALLSVLLYATALVLWP), and 294-314 (LAVAILTAINLLAYVADLVHS).

This sequence belongs to the MAL family. Widely expressed. Not detected in thymus.

The protein localises to the membrane. This Homo sapiens (Human) protein is Myeloid-associated differentiation marker (MYADM).